The primary structure comprises 362 residues: Shewanella-like protein phosphatase 1 (362 aa).

A signal peptide spans 1 to 23 (MIFKKALYILLFLYIAIVKKGES). Mn(2+)-binding residues include Asp-65, His-67, Asp-101, and Asn-136. Catalysis depends on His-137, which acts as the Proton donor. His-196 contacts Mn(2+).

This sequence belongs to the metallophosphoesterase superfamily. SLP family. The cofactor is Mn(2+).

In terms of biological role, phosphatase which plays an essential role in the development and differentiation of the ookinete and in the formation of ookinete micronemes. The chain is Shewanella-like protein phosphatase 1 from Plasmodium berghei (strain Anka).